A 354-amino-acid polypeptide reads, in one-letter code: S-adenosylmethionine:tRNA ribosyltransferase-isomerase (354 aa).

The protein belongs to the QueA family. Monomer.

Its subcellular location is the cytoplasm. It carries out the reaction 7-aminomethyl-7-carbaguanosine(34) in tRNA + S-adenosyl-L-methionine = epoxyqueuosine(34) in tRNA + adenine + L-methionine + 2 H(+). The protein operates within tRNA modification; tRNA-queuosine biosynthesis. Transfers and isomerizes the ribose moiety from AdoMet to the 7-aminomethyl group of 7-deazaguanine (preQ1-tRNA) to give epoxyqueuosine (oQ-tRNA). The polypeptide is S-adenosylmethionine:tRNA ribosyltransferase-isomerase (Thermosynechococcus vestitus (strain NIES-2133 / IAM M-273 / BP-1)).